Here is a 245-residue protein sequence, read N- to C-terminus: UDP-N-acetyl-D-mannosaminuronic acid transferase (245 aa).

Belongs to the glycosyltransferase 26 family.

The catalysed reaction is UDP-N-acetyl-alpha-D-mannosaminouronate + N-acetyl-alpha-D-glucosaminyl-di-trans,octa-cis-undecaprenyl diphosphate = beta-D-ManNAcA-(1-&gt;4)-alpha-D-GlcNAc-di-trans,octa-cis-undecaprenyl diphosphate + UDP + H(+). It participates in bacterial outer membrane biogenesis; enterobacterial common antigen biosynthesis. Catalyzes the synthesis of Und-PP-GlcNAc-ManNAcA (Lipid II), the second lipid-linked intermediate involved in enterobacterial common antigen (ECA) synthesis. The protein is UDP-N-acetyl-D-mannosaminuronic acid transferase of Photorhabdus laumondii subsp. laumondii (strain DSM 15139 / CIP 105565 / TT01) (Photorhabdus luminescens subsp. laumondii).